A 248-amino-acid chain; its full sequence is Gamma-interferon-inducible lysosomal thiol reductase (248 aa).

The signal sequence occupies residues 1-26 (MSWSPILPFLSLLLLLFPLEVPRAAT). Residues 27 to 54 (ASLSQASSEGTTTCKAHDVCLLGPRPLP) constitute a propeptide, removed in mature form. A disulfide bond links Cys69 and Cys72. 2 N-linked (GlcNAc...) asparagine glycosylation sites follow: Asn92 and Asn105. Positions 231 to 248 (KPDICSSIADSPRKVCYK) are cleaved as a propeptide — removed in mature form.

Belongs to the GILT family. In terms of assembly, dimer; disulfide-linked. In terms of processing, N-glycosylated. Sugar chains contain mannose-6-phosphate. Post-translationally, synthesized as a 35 kDa precursor which is then processed into the mature 30 kDa form via cleavage of N-terminal and C-terminal propeptides. Processing of the precursor is mediated by multiple lysosomal proteases.

It is found in the secreted. It localises to the lysosome. In terms of biological role, lysosomal thiol reductase that can reduce protein disulfide bonds. May facilitate the complete unfolding of proteins destined for lysosomal degradation. Plays an important role in antigen processing. Facilitates the generation of MHC class II-restricted epitodes from disulfide bond-containing antigen by the endocytic reduction of disulfide bonds. Also facilitates MHC class I-restricted recognition of exogenous antigens containing disulfide bonds by CD8+ T-cells or crosspresentation. This chain is Gamma-interferon-inducible lysosomal thiol reductase (Ifi30), found in Mus musculus (Mouse).